The sequence spans 123 residues: Large ribosomal subunit protein bL12 (123 aa).

Belongs to the bacterial ribosomal protein bL12 family. In terms of assembly, homodimer. Part of the ribosomal stalk of the 50S ribosomal subunit. Forms a multimeric L10(L12)X complex, where L10 forms an elongated spine to which 2 to 4 L12 dimers bind in a sequential fashion. Binds GTP-bound translation factors.

In terms of biological role, forms part of the ribosomal stalk which helps the ribosome interact with GTP-bound translation factors. Is thus essential for accurate translation. The protein is Large ribosomal subunit protein bL12 of Clostridium botulinum (strain ATCC 19397 / Type A).